A 258-amino-acid chain; its full sequence is Pyridoxine 5'-phosphate synthase (258 aa).

N16 lines the 3-amino-2-oxopropyl phosphate pocket. Residue 18–19 participates in 1-deoxy-D-xylulose 5-phosphate binding; it reads DH. R27 is a 3-amino-2-oxopropyl phosphate binding site. H52 acts as the Proton acceptor in catalysis. 1-deoxy-D-xylulose 5-phosphate is bound by residues R54 and H59. The Proton acceptor role is filled by E79. Residue T109 coordinates 1-deoxy-D-xylulose 5-phosphate. Catalysis depends on H200, which acts as the Proton donor. 3-amino-2-oxopropyl phosphate contacts are provided by residues G201 and 222–223; that span reads GH.

Belongs to the PNP synthase family. In terms of assembly, homooctamer; tetramer of dimers.

Its subcellular location is the cytoplasm. The catalysed reaction is 3-amino-2-oxopropyl phosphate + 1-deoxy-D-xylulose 5-phosphate = pyridoxine 5'-phosphate + phosphate + 2 H2O + H(+). It participates in cofactor biosynthesis; pyridoxine 5'-phosphate biosynthesis; pyridoxine 5'-phosphate from D-erythrose 4-phosphate: step 5/5. In terms of biological role, catalyzes the complicated ring closure reaction between the two acyclic compounds 1-deoxy-D-xylulose-5-phosphate (DXP) and 3-amino-2-oxopropyl phosphate (1-amino-acetone-3-phosphate or AAP) to form pyridoxine 5'-phosphate (PNP) and inorganic phosphate. In Burkholderia lata (strain ATCC 17760 / DSM 23089 / LMG 22485 / NCIMB 9086 / R18194 / 383), this protein is Pyridoxine 5'-phosphate synthase.